Here is a 138-residue protein sequence, read N- to C-terminus: Basic phospholipase A2 homolog acutohaemolysin (138 aa).

Positions 1–16 (MRALWIVAVLLVGVEG) are cleaved as a signal peptide. 7 cysteine pairs are disulfide-bonded: cysteine 42–cysteine 131, cysteine 44–cysteine 60, cysteine 59–cysteine 111, cysteine 65–cysteine 138, cysteine 66–cysteine 104, cysteine 73–cysteine 97, and cysteine 91–cysteine 102. An important for membrane-damaging activities in eukaryotes and bacteria; heparin-binding region spans residues 121 to 133 (KSFRYHLKPSCKK).

As to quaternary structure, monomer. In terms of tissue distribution, expressed by the venom gland.

The protein localises to the secreted. Functionally, snake venom phospholipase A2 homolog that lacks enzymatic activity. Is myotoxic. Has a strong indirect hemolytic activity and anticoagulant activity. A model of myotoxic mechanism has been proposed: an apo Lys49-PLA2 is activated by the entrance of a hydrophobic molecule (e.g. fatty acid) at the hydrophobic channel of the protein leading to a reorientation of a monomer. This reorientation causes a transition between 'inactive' to 'active' states, causing alignment of C-terminal and membrane-docking sites (MDoS) side-by-side and putting the membrane-disruption sites (MDiS) in the same plane, exposed to solvent and in a symmetric position for both monomers. The MDoS region stabilizes the toxin on membrane by the interaction of charged residues with phospholipid head groups. Subsequently, the MDiS region destabilizes the membrane with penetration of hydrophobic residues. This insertion causes a disorganization of the membrane, allowing an uncontrolled influx of ions (i.e. calcium and sodium), and eventually triggering irreversible intracellular alterations and cell death. In Deinagkistrodon acutus (Hundred-pace snake), this protein is Basic phospholipase A2 homolog acutohaemolysin.